The chain runs to 434 residues: Origin recognition complex subunit 4 (434 aa).

N6-methyllysine is present on K7. ATP is bound at residue 65-72 (GPRGSGKT).

The protein belongs to the ORC4 family. Component of ORC, a complex composed of at least 6 subunits: ORC1, ORC2, ORC3, ORC4, ORC5 and ORC6. ORC is regulated in a cell-cycle dependent manner. It is sequentially assembled at the exit from anaphase of mitosis and disassembled as cells enter S phase. Interacts with DBF4. Interacts with POLQ.

It localises to the nucleus. In terms of biological role, component of the origin recognition complex (ORC) that binds origins of replication. DNA-binding is ATP-dependent. The specific DNA sequences that define origins of replication have not been identified yet. ORC is required to assemble the pre-replication complex necessary to initiate DNA replication. Binds histone H3 and H4 trimethylation marks H3K9me3, H3K27me3 and H4K20me3. The polypeptide is Origin recognition complex subunit 4 (Orc4) (Rattus norvegicus (Rat)).